The chain runs to 269 residues: RBPJ-interacting and tubulin-associated protein 1 (269 aa).

The Nuclear export signal motif lies at 5-17; the sequence is VELAVSGMQTLGL. 2 disordered regions span residues 66–105 and 141–269; these read VGKE…PISH and LWTP…PPWK. Residues 80 to 92 are compositionally biased toward polar residues; the sequence is CETTPSRGSTPTL. Positions 92–108 match the Nuclear localization signal motif; the sequence is LTPRKKNKYRPISHTPS. The tract at residues 128–156 is interaction with RBPJ/RBPSUH; sequence RMAKGDAAKLRALLWTPPPTPRGSHSPRP. Residues 156 to 269 form an interaction with tubulin region; sequence PREAPLRAIH…ATQKPKPPWK (114 aa). Over residues 200 to 253 the composition is skewed to polar residues; the sequence is HSLTHLNVPSTGHPATSAPHTNGPQDLRPSTSGVTFRSPLVTSRARSVSISVPS.

This sequence belongs to the RITA family. As to quaternary structure, interacts with RBPJ/RBPSUH.

The protein localises to the cytoplasm. It is found in the nucleus. Its subcellular location is the cytoskeleton. It localises to the microtubule organizing center. The protein resides in the centrosome. In terms of biological role, tubulin-binding protein that acts as a negative regulator of Notch signaling pathway. Shuttles between the cytoplasm and the nucleus and mediates the nuclear export of RBPJ/RBPSUH, thereby preventing the interaction between RBPJ/RBPSUH and NICD product of Notch proteins (Notch intracellular domain), leading to down-regulate Notch-mediated transcription. May play a role in neurogenesis. This chain is RBPJ-interacting and tubulin-associated protein 1 (RITA1), found in Homo sapiens (Human).